A 301-amino-acid polypeptide reads, in one-letter code: Golgi to ER traffic protein 2 (301 aa).

The Cytoplasmic portion of the chain corresponds to 1-167 (MSEPVVDTAE…LEYNTYNQKL (167 aa)). The segment covering 42 to 55 (SQGSSVKTSGVKSV) has biased composition (low complexity). The segment at 42–93 (SQGSSVKTSGVKSVLDQEKEATSSHDDDPEIQDITEITTPPPRTPPIGEDAP) is disordered. The span at 56–67 (LDQEKEATSSHD) shows a compositional bias: basic and acidic residues. A helical membrane pass occupies residues 168-188 (WKFRFLLVRVLVTLFNFFYHY). Residues 189–214 (TSISDFHASNYAYVRDLSSEEYPVRD) are Lumenal-facing. The chain crosses the membrane as a helical span at residues 215–234 (FFTWFATSEVVLVAAYYSVF). Topologically, residues 235–278 (HSLGLFHAANQNSIILKVMSMGSMILPQLESYKPLVARFLGYYE) are cytoplasmic. A helical transmembrane segment spans residues 279 to 299 (LLGIVLGGLSLVIVLFGLLSF). Topologically, residues 300 to 301 (AN) are lumenal.

This sequence belongs to the GET2 family. Component of the Golgi to ER traffic (GET) complex, which is composed of GET1, GET2 and GET3. Within the complex, GET1 and GET2 form a heterotetramer which is stabilized by phosphatidylinositol binding and which binds to the GET3 homodimer.

Its subcellular location is the endoplasmic reticulum membrane. It localises to the golgi apparatus membrane. In terms of biological role, required for the post-translational delivery of tail-anchored (TA) proteins to the endoplasmic reticulum. Together with GET1, acts as a membrane receptor for soluble GET3, which recognizes and selectively binds the transmembrane domain of TA proteins in the cytosol. The GET complex cooperates with the HDEL receptor ERD2 to mediate the ATP-dependent retrieval of resident ER proteins that contain a C-terminal H-D-E-L retention signal from the Golgi to the ER. The polypeptide is Golgi to ER traffic protein 2 (Candida dubliniensis (strain CD36 / ATCC MYA-646 / CBS 7987 / NCPF 3949 / NRRL Y-17841) (Yeast)).